The primary structure comprises 1240 residues: Protein MMS22-like (1240 aa).

A compositionally biased stretch (polar residues) spans methionine 1–proline 11. A disordered region spans residues methionine 1–proline 26.

Belongs to the MMS22 family. MMS22L subfamily. Component of the MMS22L-TONSL complex.

The protein resides in the nucleus. It localises to the chromosome. Component of the MMS22L-TONSL complex, a complex that promotes homologous recombination-mediated repair of double-strand breaks (DSBs) at stalled or collapsed replication forks. The MMS22L-TONSL complex is required to maintain genome integrity during DNA replication. It mediates the assembly of RAD51 filaments on single-stranded DNA (ssDNA): the MMS22L-TONSL complex is recruited to DSBs following histone replacement by histone chaperones and eviction of the replication protein A complex (RPA/RP-A) from DSBs. Following recruitment to DSBs, the TONSL-MMS22L complex promotes recruitment of RAD51 filaments and subsequent homologous recombination. Within the complex, MMS22L acts by binding ssDNA. This is Protein MMS22-like (mms22l) from Danio rerio (Zebrafish).